The chain runs to 745 residues: Eukaryotic translation initiation factor 3 subunit B (745 aa).

The region spanning 41–129 (DVIVIEGVPV…HRFSVHRFTD (89 aa)) is the RRM domain. WD repeat units follow at residues 189 to 230 (EHSR…RFMR), 251 to 293 (WSHE…RSFP), 303 to 344 (GQLK…LLEK), and 580 to 625 (GEHY…LQKH). Residues 644 to 745 (GKDEQKRVRK…IIEETEEVLA (102 aa)) adopt a coiled-coil conformation.

Belongs to the eIF-3 subunit B family. Component of the eukaryotic translation initiation factor 3 (eIF-3) complex.

Its subcellular location is the cytoplasm. In terms of biological role, RNA-binding component of the eukaryotic translation initiation factor 3 (eIF-3) complex, which is involved in protein synthesis of a specialized repertoire of mRNAs and, together with other initiation factors, stimulates binding of mRNA and methionyl-tRNAi to the 40S ribosome. The eIF-3 complex specifically targets and initiates translation of a subset of mRNAs involved in cell proliferation. In Mycosarcoma maydis (Corn smut fungus), this protein is Eukaryotic translation initiation factor 3 subunit B.